The sequence spans 373 residues: Transcription factor SPATULA (373 aa).

Over residues 1–21 the composition is skewed to basic and acidic residues; it reads MISQREEREEKKQRVMGDKKL. Disordered regions lie at residues 1-46 and 141-210; these read MISQ…PSSS and VQGN…KRRR. Residues 141–160 are compositionally biased toward low complexity; that stretch reads VQGNSSGTRVSSSSVGASGN. The span at 161-177 shows a compositional bias: acidic residues; the sequence is ETDEYDCESEEGGEAVV. Residues 182-191 are compositionally biased toward low complexity; sequence SSKSGPSSRS. The segment covering 197–210 has biased composition (basic and acidic residues); sequence RAAEVHNLSEKRRR. Residues 197–246 form the bHLH domain; sequence RAAEVHNLSEKRRRSRINEKMKALQSLIPNSNKTDKASMLDEAIEYLKQL.

Homodimer. Interacts with HEC1, HEC2 and HEC3. Binds to RGL2 and RGA. In terms of tissue distribution, expressed in lateral root caps, young leaves, stipules, maturing pith cells of the stem, differentiating vascular cells, shoot apical meristems and flowers.

It localises to the nucleus. Transcription factor that plays a role in floral organogenesis. Promotes the growth of carpel margins and of pollen tract tissues derived from them. The sequence is that of Transcription factor SPATULA (SPT) from Arabidopsis thaliana (Mouse-ear cress).